Reading from the N-terminus, the 351-residue chain is Heat-inducible transcription repressor HrcA (351 aa).

It belongs to the HrcA family.

Functionally, negative regulator of class I heat shock genes (grpE-dnaK-dnaJ and groELS operons). Prevents heat-shock induction of these operons. The sequence is that of Heat-inducible transcription repressor HrcA from Fusobacterium nucleatum subsp. nucleatum (strain ATCC 25586 / DSM 15643 / BCRC 10681 / CIP 101130 / JCM 8532 / KCTC 2640 / LMG 13131 / VPI 4355).